Consider the following 155-residue polypeptide: MLSPKRVKFRKQQRGRMRGVATRGNTIAFGQFALQAQECGWITSRQIEASRRAMTRYVKRGGKIWIRIFPDKPVTMRPAETRMGSGKGNPEFWVAVIKPGRILFEMGGEEITPEIAKEAMRLAQYKLPLKTKFICLDEQEQPAGTKAAASSTVES.

The protein belongs to the universal ribosomal protein uL16 family. In terms of assembly, part of the 50S ribosomal subunit.

Functionally, binds 23S rRNA and is also seen to make contacts with the A and possibly P site tRNAs. The protein is Large ribosomal subunit protein uL16 of Synechococcus sp. (strain CC9311).